The primary structure comprises 478 residues: UDP-N-acetylmuramate--L-alanine ligase (478 aa).

ATP is bound at residue 112–118 (GTHGKTT).

It belongs to the MurCDEF family.

The protein resides in the cytoplasm. The enzyme catalyses UDP-N-acetyl-alpha-D-muramate + L-alanine + ATP = UDP-N-acetyl-alpha-D-muramoyl-L-alanine + ADP + phosphate + H(+). It functions in the pathway cell wall biogenesis; peptidoglycan biosynthesis. In terms of biological role, cell wall formation. The sequence is that of UDP-N-acetylmuramate--L-alanine ligase from Polynucleobacter asymbioticus (strain DSM 18221 / CIP 109841 / QLW-P1DMWA-1) (Polynucleobacter necessarius subsp. asymbioticus).